The primary structure comprises 688 residues: Sodium channel and clathrin linker 1 (688 aa).

The residue at position 2 (Ala-2) is an N-acetylalanine. Positions 69–673 (ELNGQLKYYQ…SASQQLSVIT (605 aa)) form a coiled coil. Ser-681 carries the post-translational modification Phosphoserine.

Interacts with SCN10A and clathrin. Identified in a complex containing SCN10A, clathrin and SCLT1.

The protein resides in the cytoplasm. Its subcellular location is the cytoskeleton. It localises to the microtubule organizing center. The protein localises to the centrosome. It is found in the centriole. Functionally, adapter protein that links SCN10A to clathrin. Regulates SCN10A channel activity, possibly by promoting channel internalization. The polypeptide is Sodium channel and clathrin linker 1 (SCLT1) (Homo sapiens (Human)).